The sequence spans 158 residues: Large ribosomal subunit protein uL15 (158 aa).

Basic and acidic residues predominate over residues 1–13; that stretch reads MKLNEIKDNEGST. Residues 1–44 are disordered; that stretch reads MKLNEIKDNEGSTHSRKRLGRGIGSGSGKTAGRGVKGQKSRSGV. Positions 21–35 are enriched in gly residues; it reads RGIGSGSGKTAGRGV.

It belongs to the universal ribosomal protein uL15 family. In terms of assembly, part of the 50S ribosomal subunit.

In terms of biological role, binds to the 23S rRNA. The protein is Large ribosomal subunit protein uL15 of Rhizobium etli (strain ATCC 51251 / DSM 11541 / JCM 21823 / NBRC 15573 / CFN 42).